The sequence spans 520 residues: Ubiquitin carboxyl-terminal hydrolase MINDY-1 (520 aa).

The segment at methionine 1–methionine 155 is disordered. Basic and acidic residues predominate over residues lysine 26–lysine 37. Residues threonine 43–lysine 54 show a composition bias toward polar residues. Positions alanine 77 to lysine 86 are enriched in low complexity. 2 stretches are compositionally biased toward polar residues: residues valine 93–methionine 112 and serine 132–glutamate 146. Residue cysteine 189 is the Nucleophile of the active site. The active-site Proton acceptor is histidine 371. Disordered regions lie at residues serine 422 to glutamine 441 and glutamate 467 to leucine 520. The segment at glutamine 441 to glutamine 479 is ubiquitin-binding domain (UBD). The span at alanine 469–glutamine 498 shows a compositional bias: low complexity. The span at lysine 511–leucine 520 shows a compositional bias: basic and acidic residues.

Belongs to the MINDY deubiquitinase family. FAM63 subfamily.

It catalyses the reaction Thiol-dependent hydrolysis of ester, thioester, amide, peptide and isopeptide bonds formed by the C-terminal Gly of ubiquitin (a 76-residue protein attached to proteins as an intracellular targeting signal).. Hydrolase that can specifically remove 'Lys-48'-linked conjugated ubiquitin from proteins. May play a regulatory role at the level of protein turnover. This Danio rerio (Zebrafish) protein is Ubiquitin carboxyl-terminal hydrolase MINDY-1 (mindy1).